The following is a 234-amino-acid chain: Orotate phosphoribosyltransferase (234 aa).

Lys-30 lines the 5-phospho-alpha-D-ribose 1-diphosphate pocket. Residue 38–39 coordinates orotate; the sequence is FF. 5-phospho-alpha-D-ribose 1-diphosphate contacts are provided by residues 76 to 77, Arg-103, Lys-104, Lys-107, His-109, and 128 to 136; these read YK and DDVITAGTA. Residues Thr-132 and Arg-160 each contribute to the orotate site.

It belongs to the purine/pyrimidine phosphoribosyltransferase family. PyrE subfamily. In terms of assembly, homodimer. It depends on Mg(2+) as a cofactor.

The catalysed reaction is orotidine 5'-phosphate + diphosphate = orotate + 5-phospho-alpha-D-ribose 1-diphosphate. The protein operates within pyrimidine metabolism; UMP biosynthesis via de novo pathway; UMP from orotate: step 1/2. Its function is as follows. Catalyzes the transfer of a ribosyl phosphate group from 5-phosphoribose 1-diphosphate to orotate, leading to the formation of orotidine monophosphate (OMP). The sequence is that of Orotate phosphoribosyltransferase from Chromohalobacter salexigens (strain ATCC BAA-138 / DSM 3043 / CIP 106854 / NCIMB 13768 / 1H11).